The primary structure comprises 264 residues: Glutamate racemase (264 aa).

Substrate is bound by residues 10 to 11 and 42 to 43; these read DS and YG. Cysteine 73 functions as the Proton donor/acceptor in the catalytic mechanism. 74–75 is a substrate binding site; it reads NT. Cysteine 183 functions as the Proton donor/acceptor in the catalytic mechanism. 184 to 185 lines the substrate pocket; that stretch reads TH.

Belongs to the aspartate/glutamate racemases family.

It carries out the reaction L-glutamate = D-glutamate. The protein operates within cell wall biogenesis; peptidoglycan biosynthesis. Its function is as follows. Provides the (R)-glutamate required for cell wall biosynthesis. This chain is Glutamate racemase, found in Streptococcus gordonii (strain Challis / ATCC 35105 / BCRC 15272 / CH1 / DL1 / V288).